Consider the following 145-residue polypeptide: Ribonuclease H (145 aa).

Residues 1–141 (MQEVELFTDG…VDELANQAMD (141 aa)) enclose the RNase H type-1 domain. Mg(2+)-binding residues include aspartate 9, glutamate 47, aspartate 69, and aspartate 133.

This sequence belongs to the RNase H family. In terms of assembly, monomer. Mg(2+) is required as a cofactor.

It localises to the cytoplasm. It catalyses the reaction Endonucleolytic cleavage to 5'-phosphomonoester.. Endonuclease that specifically degrades the RNA of RNA-DNA hybrids. In Hydrogenovibrio crunogenus (strain DSM 25203 / XCL-2) (Thiomicrospira crunogena), this protein is Ribonuclease H.